The following is a 614-amino-acid chain: Pentatricopeptide repeat-containing protein At1g63080, mitochondrial (614 aa).

A mitochondrion-targeting transit peptide spans 1-7 (MSLAKRF). PPR repeat units follow at residues 64–98 (SIVE…GVSH), 99–133 (NLYT…GYGP), 134–168 (SIVT…GYQP), 169–203 (DTVT…GCQP), 204–238 (DLVT…KIEA), 239–273 (DVVI…GIRP), 274–308 (DVFT…KINP), 309–343 (NVVT…SIDP), 344–378 (NIVT…DCLP), 379–413 (DVVT…GLVG), 414–448 (NTVT…GVHP), 449–483 (NIMT…KMEP), 484–518 (DIYT…GVKP), 519–553 (DVIA…GPLP), and 554–588 (DSGT…RFAG).

The protein belongs to the PPR family. P subfamily.

Its subcellular location is the mitochondrion. The sequence is that of Pentatricopeptide repeat-containing protein At1g63080, mitochondrial from Arabidopsis thaliana (Mouse-ear cress).